The following is a 795-amino-acid chain: Glutamine--tRNA ligase, cytoplasmic (795 aa).

The interval Ala-188–Ser-220 is disordered. Residues Lys-200 to Val-212 are compositionally biased toward basic and acidic residues. The short motif at Pro-277–His-287 is the 'HIGH' region element. Residues Glu-278 to Asn-280 and His-284 to Ala-290 contribute to the ATP site. The L-glutamine site is built by Asp-310 and Tyr-450. ATP contacts are provided by residues Thr-469, Arg-498–Leu-499, and Met-506–Lys-508. The 'KMSKS' region signature appears at Val-505–Arg-509.

This sequence belongs to the class-I aminoacyl-tRNA synthetase family.

The protein resides in the cytoplasm. Its subcellular location is the cytosol. It catalyses the reaction tRNA(Gln) + L-glutamine + ATP = L-glutaminyl-tRNA(Gln) + AMP + diphosphate. The sequence is that of Glutamine--tRNA ligase, cytoplasmic from Arabidopsis thaliana (Mouse-ear cress).